A 244-amino-acid polypeptide reads, in one-letter code: Mitochondrial import inner membrane translocase subunit Tim21 (244 aa).

Residues 1-18 constitute a mitochondrion transit peptide; the sequence is MICAFLRVVQHAEKLHGS. The disordered stretch occupies residues 65-96; the sequence is TQGPDPRKAKEDSTKQVSIRRNQREETGVSMS. Over residues 69 to 78 the composition is skewed to basic and acidic residues; sequence DPRKAKEDST. Residues 107–127 form a helical membrane-spanning segment; the sequence is SYLIVVLFGVGLTGGLLYAIF.

This sequence belongs to the TIM21 family. In terms of assembly, component of the TIM23 complex. Component of the MITRAC (mitochondrial translation regulation assembly intermediate of cytochrome c oxidase complex) complex, the core components of this complex being COA3/MITRAC12 and COX14. Interacts with COA3 and MT-CO1/COX1.

It is found in the mitochondrion membrane. Participates in the translocation of transit peptide-containing proteins across the mitochondrial inner membrane. Also required for assembly of mitochondrial respiratory chain complex I and complex IV as component of the MITRAC (mitochondrial translation regulation assembly intermediate of cytochrome c oxidase complex) complex. Probably shuttles between the presequence translocase and respiratory-chain assembly intermediates in a process that promotes incorporation of early nuclear-encoded subunits into these complexes. The protein is Mitochondrial import inner membrane translocase subunit Tim21 (Timm21) of Mus musculus (Mouse).